Reading from the N-terminus, the 127-residue chain is Secreted RxLR effector protein 3 (127 aa).

A signal peptide spans 1 to 20 (MRPPLLLFLTVTVLVSCASA). The RxLR-dEER motif lies at 30–48 (RSLRSIKTTTNDDAAEEER).

It belongs to the RxLR effector family.

It localises to the secreted. It is found in the host cell. Functionally, secreted effector that partially suppresses elicitor-induced cell death in host and enhances virulence of P.parasitica. This Phytophthora nicotianae (Potato buckeye rot agent) protein is Secreted RxLR effector protein 3.